Here is a 761-residue protein sequence, read N- to C-terminus: Nitrogen fixation protein FixI (761 aa).

At 1-120 the chain is on the cytoplasmic side; the sequence is MSCCTMDAES…SAPESDKTRN (120 aa). The region spanning 36-106 is the HMA domain; that stretch reads RQLDLSVSDV…EINSAGYRAH (71 aa). Residues C47 and C50 each contribute to the a metal cation site. Residues 121–142 traverse the membrane as a helical segment; that stretch reads QLLLAIGVSGFAAPNIMLLSVS. At 143–155 the chain is on the extracellular side; it reads VWSGADAATRDMF. The chain crosses the membrane as a helical span at residues 156–177; that stretch reads HWISAMIAAPALVYAGRFFFKS. Residues 178–184 are Cytoplasmic-facing; it reads AWNALRH. The helical transmembrane segment at 185–205 threads the bilayer; the sequence is GRTNMDVPISVTVSLSYAVSL. The Extracellular portion of the chain corresponds to 206–217; that stretch reads WETVHHGEHAWF. The helical transmembrane segment at 218 to 238 threads the bilayer; the sequence is DASVSLLFFLLIGRTLDHIMR. Over 239-367 the chain is Cytoplasmic; it reads EKARAAINGL…RARYRRIADR (129 aa). A helical transmembrane segment spans residues 368 to 390; the sequence is AATLYSPVVHLLALVSFLAWGFL. Topologically, residues 391–395 are extracellular; sequence GGDWK. Residues 396–415 traverse the membrane as a helical segment; that stretch reads QAMLVAVAVLIITCPCALGL. Over 416–691 the chain is Cytoplasmic; it reads AVPVVQVVAA…AVARRSASLI (276 aa). D453 serves as the catalytic 4-aspartylphosphate intermediate. Positions 637 and 641 each coordinate Mg(2+). Residues 692 to 711 traverse the membrane as a helical segment; it reads RQNFALAIGYNVLAVPIAIA. Residues 712 to 716 are Extracellular-facing; it reads GLATP. A helical transmembrane segment spans residues 717–735; the sequence is LIAAVAMSTSSIIVVTNAL. At 736 to 761 the chain is on the cytoplasmic side; it reads RLNGFGKRPDMHIRRGIGRSAEVKAA.

This sequence belongs to the cation transport ATPase (P-type) (TC 3.A.3) family. Type IB subfamily.

It localises to the cell membrane. It catalyses the reaction ATP + H2O = ADP + phosphate + H(+). In terms of biological role, fixI is a pump of a specific cation involved in symbiotic nitrogen fixation. The four proteins FixG, FixH, FixI, and FixS may participate in a membrane-bound complex coupling the FixI cation pump with a redox process catalyzed by FixG. The protein is Nitrogen fixation protein FixI (fixI) of Rhizobium leguminosarum bv. viciae.